A 98-amino-acid polypeptide reads, in one-letter code: Large ribosomal subunit protein uL23 (98 aa).

Belongs to the universal ribosomal protein uL23 family. As to quaternary structure, part of the 50S ribosomal subunit. Contacts protein L29, and trigger factor when it is bound to the ribosome.

Its function is as follows. One of the early assembly proteins it binds 23S rRNA. One of the proteins that surrounds the polypeptide exit tunnel on the outside of the ribosome. Forms the main docking site for trigger factor binding to the ribosome. In Nitrosococcus oceani (strain ATCC 19707 / BCRC 17464 / JCM 30415 / NCIMB 11848 / C-107), this protein is Large ribosomal subunit protein uL23.